The sequence spans 134 residues: Parvalbumin-like EF-hand-containing protein (134 aa).

2 consecutive EF-hand domains span residues 55–90 (QLDDAIHTAFQSLDKDKSGFIEWNEIKYILSIIPSS) and 96–131 (LTDEEAEAMIQAADTHGDGRINYEEFSELIKKEKIP). Ca(2+) is bound by residues D68, D70, S72, F74, E76, E79, D109, D113, and E120.

This sequence belongs to the parvalbumin family.

In Homo sapiens (Human), this protein is Parvalbumin-like EF-hand-containing protein.